The following is a 98-amino-acid chain: uncharacterized protein (98 aa).

A run of 2 helical transmembrane segments spans residues 2–22 and 70–90; these read IVTL…GLWW and AAKA…LPIL.

The protein localises to the cell membrane. This is an uncharacterized protein from Sinorhizobium fredii (strain NBRC 101917 / NGR234).